The primary structure comprises 195 residues: Large ribosomal subunit protein bL25 (195 aa).

Belongs to the bacterial ribosomal protein bL25 family. CTC subfamily. Part of the 50S ribosomal subunit; part of the 5S rRNA/L5/L18/L25 subcomplex. Contacts the 5S rRNA. Binds to the 5S rRNA independently of L5 and L18.

Functionally, this is one of the proteins that binds to the 5S RNA in the ribosome where it forms part of the central protuberance. This chain is Large ribosomal subunit protein bL25, found in Geobacter metallireducens (strain ATCC 53774 / DSM 7210 / GS-15).